The primary structure comprises 876 residues: Alanine--tRNA ligase (876 aa).

Histidine 564, histidine 568, cysteine 666, and histidine 670 together coordinate Zn(2+).

Belongs to the class-II aminoacyl-tRNA synthetase family. As to quaternary structure, homotetramer. Zn(2+) is required as a cofactor.

The protein resides in the cytoplasm. It carries out the reaction tRNA(Ala) + L-alanine + ATP = L-alanyl-tRNA(Ala) + AMP + diphosphate. Catalyzes the attachment of alanine to tRNA(Ala) in a two-step reaction: alanine is first activated by ATP to form Ala-AMP and then transferred to the acceptor end of tRNA(Ala). Also edits incorrectly charged Ser-tRNA(Ala) and Gly-tRNA(Ala) via its editing domain. This Salmonella typhi protein is Alanine--tRNA ligase.